Reading from the N-terminus, the 309-residue chain is Glutaminase (309 aa).

Residues S65, N117, E162, N169, Y193, Y245, and V263 each contribute to the substrate site.

This sequence belongs to the glutaminase family. In terms of assembly, homotetramer.

The catalysed reaction is L-glutamine + H2O = L-glutamate + NH4(+). The chain is Glutaminase from Bacillus cereus (strain ATCC 10987 / NRS 248).